The sequence spans 318 residues: Petal death protein (318 aa).

The propeptide at 1–3 is removed in mature form; that stretch reads MAP. Residues 1–24 form a disordered region; the sequence is MAPPNGTTNGETEVATQGSYTAVS. Mg(2+)-binding residues include Asp107, Asp109, and Lys142.

It belongs to the isocitrate lyase/PEP mutase superfamily. In terms of assembly, homodimer and homotetramer formed by a dimer of homodimer. Requires Mg(2+) as cofactor. Mn(2+) serves as cofactor. The cofactor is Fe(2+). Co(2+) is required as a cofactor. In terms of tissue distribution, accumulates in senescing flower petals.

The catalysed reaction is oxaloacetate + H2O = oxalate + acetate + H(+). Functionally, catalyzes cleavage of the C(2)-C(3) bond in oxaloacetate and in (2R)-alkyl malate derivatives to form oxalate and acetate, and alkyl carboxylates and R-ketocarboxylates, respectively. This chain is Petal death protein, found in Dianthus caryophyllus (Carnation).